Here is an 873-residue protein sequence, read N- to C-terminus: MTTAHIDAEYQANAIESQIQNDWENRKAFKVADTVEGKHRYILSMFPYPSGKLHMGHVRNYTIGDVISRFYRLKGETVLQPMGWDAFGLPAENAAIAHQVAPAKWTFENIAYMRDQLKKLGLSIDWDREFATCTPEYYHWEQWLFVQLYKKGLIYRKLSTVNWDPVDQTVLANEQVENGRGWRSGALVEKRDIPMYYFRITDYAQELLDDLDTLKDGWPQQVLTMQRNWIGRSTGMDITFPSANPEIYADGLTVYTTRADTLMGVTYVAVAAEHPMALKAAENNPELAAFIEECRMGSVAEADLATAEKKGMATGLFVKHPVTGEEVPVWIANYVLMSYGSGAVMAVPAHDERDFEFANKFNLPIKQVIDAKAADDAEYSVTAWQEWYGSKEGTLVNSGEFDGLEFQAAFDAFLAKLEPQGLANSKVQFRLRDWGVSRQRYWGCPIPMINCDSCGQVPVPEEQLPVVLPTDVVPDGSGNPLNKMPEFYETTCPSCGGHARRETDTLDTFVESSWYYARYASPDFTGGMVKPEAAQSWLPVNQYIGGVEHAILHLLYARFFHKLMRDEGVVQGNEPFTNLLTQGMVLADTFYRESESGKKTWFNPADIILERDEKGRIVSAKYSGDGQDVVIGGQEKMSKSKNNGIDPQAIIDQYGADTARVFMMFAAPPDQSLEWSDAGVEGANRFLKRVWRLATGFLEKGYAQAPIAAELSKDAQDLRRKTHETIQKVGDDIERRHAFNTAIAALMELLNATSKFEVQTADDAAVAREAIETLLTLLAPFAPHLSQTLLAEFGIDLIAAQFPSVDESALTRNTQTIVVQVNGKLRGKLEVSVEISKDELLAQAKALPEIQQFLTGPTKKEIVVPNKLVNLVV.

The 'HIGH' region signature appears at 47 to 57 (PYPSGKLHMGH). Positions 636 to 640 (KMSKS) match the 'KMSKS' region motif. An ATP-binding site is contributed by K639.

It belongs to the class-I aminoacyl-tRNA synthetase family.

The protein resides in the cytoplasm. It carries out the reaction tRNA(Leu) + L-leucine + ATP = L-leucyl-tRNA(Leu) + AMP + diphosphate. In Acinetobacter baylyi (strain ATCC 33305 / BD413 / ADP1), this protein is Leucine--tRNA ligase.